The chain runs to 202 residues: ATP-dependent Clp protease proteolytic subunit 1 (202 aa).

The active-site Nucleophile is Ser99. The active site involves His123.

The protein belongs to the peptidase S14 family. In terms of assembly, fourteen ClpP subunits assemble into 2 heptameric rings which stack back to back to give a disk-like structure with a central cavity, resembling the structure of eukaryotic proteasomes.

The protein localises to the cytoplasm. It catalyses the reaction Hydrolysis of proteins to small peptides in the presence of ATP and magnesium. alpha-casein is the usual test substrate. In the absence of ATP, only oligopeptides shorter than five residues are hydrolyzed (such as succinyl-Leu-Tyr-|-NHMec, and Leu-Tyr-Leu-|-Tyr-Trp, in which cleavage of the -Tyr-|-Leu- and -Tyr-|-Trp bonds also occurs).. Cleaves peptides in various proteins in a process that requires ATP hydrolysis. Has a chymotrypsin-like activity. Plays a major role in the degradation of misfolded proteins. This Symbiobacterium thermophilum (strain DSM 24528 / JCM 14929 / IAM 14863 / T) protein is ATP-dependent Clp protease proteolytic subunit 1.